The following is a 383-amino-acid chain: Anhydro-N-acetylmuramic acid kinase (383 aa).

Residue 9-16 coordinates ATP; it reads GTSVDSID.

This sequence belongs to the anhydro-N-acetylmuramic acid kinase family.

The enzyme catalyses 1,6-anhydro-N-acetyl-beta-muramate + ATP + H2O = N-acetyl-D-muramate 6-phosphate + ADP + H(+). It functions in the pathway amino-sugar metabolism; 1,6-anhydro-N-acetylmuramate degradation. Its pathway is cell wall biogenesis; peptidoglycan recycling. Functionally, catalyzes the specific phosphorylation of 1,6-anhydro-N-acetylmuramic acid (anhMurNAc) with the simultaneous cleavage of the 1,6-anhydro ring, generating MurNAc-6-P. Is required for the utilization of anhMurNAc either imported from the medium or derived from its own cell wall murein, and thus plays a role in cell wall recycling. In Crocosphaera subtropica (strain ATCC 51142 / BH68) (Cyanothece sp. (strain ATCC 51142)), this protein is Anhydro-N-acetylmuramic acid kinase.